We begin with the raw amino-acid sequence, 269 residues long: Zinc import ATP-binding protein ZnuC (269 aa).

The ABC transporter domain maps to 6-221; the sequence is VRLTQVGVSF…PAFVELFGQD (216 aa). Position 38 to 45 (38 to 45) interacts with ATP; it reads GPNGAGKT.

The protein belongs to the ABC transporter superfamily. Zinc importer (TC 3.A.1.15.5) family. The complex is composed of two ATP-binding proteins (ZnuC), two transmembrane proteins (ZnuB) and a solute-binding protein (ZnuA).

The protein resides in the cell inner membrane. It carries out the reaction Zn(2+)(out) + ATP(in) + H2O(in) = Zn(2+)(in) + ADP(in) + phosphate(in) + H(+)(in). In terms of biological role, part of the ABC transporter complex ZnuABC involved in zinc import. Responsible for energy coupling to the transport system. The polypeptide is Zinc import ATP-binding protein ZnuC (Pseudomonas aeruginosa (strain UCBPP-PA14)).